The sequence spans 156 residues: Ribosome maturation factor RimP (156 aa).

This sequence belongs to the RimP family.

It is found in the cytoplasm. Functionally, required for maturation of 30S ribosomal subunits. This chain is Ribosome maturation factor RimP, found in Bacillus cereus (strain G9842).